The chain runs to 73 residues: MSTGIWIMIVIIALLVGAVGGFFFARRYMENYLKNNPPINEDMLRTMMLQMGQKPSQKKLHQMMTAMQNQSKK.

A helical transmembrane segment spans residues 5 to 25 (IWIMIVIIALLVGAVGGFFFA).

The protein belongs to the UPF0154 family.

It is found in the cell membrane. This is UPF0154 protein PEPE_0872 from Pediococcus pentosaceus (strain ATCC 25745 / CCUG 21536 / LMG 10740 / 183-1w).